The primary structure comprises 476 residues: Adenosylhomocysteinase (476 aa).

3 residues coordinate substrate: Thr67, Asp142, and Glu202. 203–205 is an NAD(+) binding site; the sequence is TTT. Substrate-binding residues include Lys232 and Asp236. NAD(+) contacts are provided by residues Asn237, 266 to 271, Glu289, Asn324, 345 to 347, and Asn390; these read GYGDVG and IGH.

This sequence belongs to the adenosylhomocysteinase family. NAD(+) serves as cofactor.

Its subcellular location is the cytoplasm. The catalysed reaction is S-adenosyl-L-homocysteine + H2O = L-homocysteine + adenosine. It functions in the pathway amino-acid biosynthesis; L-homocysteine biosynthesis; L-homocysteine from S-adenosyl-L-homocysteine: step 1/1. May play a key role in the regulation of the intracellular concentration of adenosylhomocysteine. This chain is Adenosylhomocysteinase, found in Prochlorococcus marinus (strain SARG / CCMP1375 / SS120).